Reading from the N-terminus, the 171-residue chain is Disulfide bond formation protein B (171 aa).

Residues Met1–Ala13 lie on the Cytoplasmic side of the membrane. Residues Trp14–Phe30 form a helical membrane-spanning segment. The Periplasmic portion of the chain corresponds to Ser31–Thr48. Cys40 and Cys43 are oxidised to a cystine. Residues Ala49–Ala63 traverse the membrane as a helical segment. At Asn64–Leu70 the chain is on the cytoplasmic side. A helical transmembrane segment spans residues Phe71 to Trp88. Residues Glu89 to Gln144 are Periplasmic-facing. Cys104 and Cys130 are joined by a disulfide. A helical transmembrane segment spans residues Trp145–Ser163. Residues Arg164–Ile171 lie on the Cytoplasmic side of the membrane.

It belongs to the DsbB family.

It is found in the cell inner membrane. In terms of biological role, required for disulfide bond formation in some periplasmic proteins. Acts by oxidizing the DsbA protein. The chain is Disulfide bond formation protein B from Pseudoalteromonas atlantica (strain T6c / ATCC BAA-1087).